A 565-amino-acid polypeptide reads, in one-letter code: Urocanate hydratase (565 aa).

NAD(+) contacts are provided by residues 61 to 62 (GG), Gln139, 185 to 187 (GMG), Glu205, Arg210, 251 to 252 (NA), 272 to 276 (QTSAH), 282 to 283 (YL), and Tyr331. Cys419 is a catalytic residue. The segment at 453–472 (LDSGSVSSPNRETESMKDGS) is disordered. Residues 463–472 (RETESMKDGS) are compositionally biased toward basic and acidic residues. Residue Gly501 participates in NAD(+) binding.

Belongs to the urocanase family. Requires NAD(+) as cofactor.

It localises to the cytoplasm. It catalyses the reaction 4-imidazolone-5-propanoate = trans-urocanate + H2O. The protein operates within amino-acid degradation; L-histidine degradation into L-glutamate; N-formimidoyl-L-glutamate from L-histidine: step 2/3. Functionally, catalyzes the conversion of urocanate to 4-imidazolone-5-propionate. In Pseudomonas syringae, this protein is Urocanate hydratase.